A 65-amino-acid chain; its full sequence is Beta-toxin Am IT (65 aa).

Position 1 is a pyrrolidone carboxylic acid (Glu); partial (Glu-1). An LCN-type CS-alpha/beta domain is found at 1 to 64 (EHGYLLDKYT…LWNYKTNKCK (64 aa)). Intrachain disulfides connect Cys-12–Cys-63, Cys-16–Cys-38, Cys-23–Cys-45, and Cys-27–Cys-47. A Serine amide modification is found at Ser-65.

This sequence belongs to the long (4 C-C) scorpion toxin superfamily. Sodium channel inhibitor family. Expressed by the venom gland.

It is found in the secreted. Functionally, has a toxic effect on insects and mammals. On German cockroach larvae, it provokes contraction, paralysis and lethality. Intracerebroventricular injection into mice causes severe neurotoxic symptoms. It fully competes with the binding of the iodinated Css4 (AC P60266) on rat brain synaptosomes, with moderate affinity and in a concentration-dependent manner (EC(50)=25 nM). It may act on both site 3 and site 4 of voltage-gated sodium channels. The chain is Beta-toxin Am IT from Androctonus mauritanicus mauritanicus (Scorpion).